The sequence spans 291 residues: Small ribosomal subunit biogenesis GTPase RsgA (291 aa).

Positions 63 to 221 constitute a CP-type G domain; sequence NNELKRPPVS…IADTPGFSAL (159 aa). Residues 112–115 and 164–172 each bind GTP; these read TKHD and GQSGVGKST. Zn(2+)-binding residues include cysteine 245, cysteine 250, histidine 252, and cysteine 258.

It belongs to the TRAFAC class YlqF/YawG GTPase family. RsgA subfamily. Monomer. Associates with 30S ribosomal subunit, binds 16S rRNA. It depends on Zn(2+) as a cofactor.

The protein resides in the cytoplasm. Functionally, one of several proteins that assist in the late maturation steps of the functional core of the 30S ribosomal subunit. Helps release RbfA from mature subunits. May play a role in the assembly of ribosomal proteins into the subunit. Circularly permuted GTPase that catalyzes slow GTP hydrolysis, GTPase activity is stimulated by the 30S ribosomal subunit. In Staphylococcus epidermidis (strain ATCC 12228 / FDA PCI 1200), this protein is Small ribosomal subunit biogenesis GTPase RsgA.